We begin with the raw amino-acid sequence, 290 residues long: ATP synthase gamma chain (290 aa).

Belongs to the ATPase gamma chain family. As to quaternary structure, F-type ATPases have 2 components, CF(1) - the catalytic core - and CF(0) - the membrane proton channel. CF(1) has five subunits: alpha(3), beta(3), gamma(1), delta(1), epsilon(1). CF(0) has three main subunits: a, b and c.

The protein localises to the cell inner membrane. In terms of biological role, produces ATP from ADP in the presence of a proton gradient across the membrane. The gamma chain is believed to be important in regulating ATPase activity and the flow of protons through the CF(0) complex. In Chlorobium luteolum (strain DSM 273 / BCRC 81028 / 2530) (Pelodictyon luteolum), this protein is ATP synthase gamma chain.